We begin with the raw amino-acid sequence, 138 residues long: Translation initiation factor 5A (138 aa).

Lys37 carries the hypusine modification.

This sequence belongs to the eIF-5A family.

Its subcellular location is the cytoplasm. Functions by promoting the formation of the first peptide bond. The chain is Translation initiation factor 5A from Pyrococcus furiosus (strain ATCC 43587 / DSM 3638 / JCM 8422 / Vc1).